A 277-amino-acid polypeptide reads, in one-letter code: Putative phosphoenolpyruvate synthase regulatory protein (277 aa).

157–164 (GVSRCGKT) lines the ADP pocket.

The protein belongs to the pyruvate, phosphate/water dikinase regulatory protein family. PSRP subfamily.

It carries out the reaction [pyruvate, water dikinase] + ADP = [pyruvate, water dikinase]-phosphate + AMP + H(+). The catalysed reaction is [pyruvate, water dikinase]-phosphate + phosphate + H(+) = [pyruvate, water dikinase] + diphosphate. Bifunctional serine/threonine kinase and phosphorylase involved in the regulation of the phosphoenolpyruvate synthase (PEPS) by catalyzing its phosphorylation/dephosphorylation. The chain is Putative phosphoenolpyruvate synthase regulatory protein from Erwinia tasmaniensis (strain DSM 17950 / CFBP 7177 / CIP 109463 / NCPPB 4357 / Et1/99).